Here is a 334-residue protein sequence, read N- to C-terminus: uncharacterized protein (334 aa).

Belongs to the Gfo/Idh/MocA family.

This is an uncharacterized protein from Rhizobium meliloti (Ensifer meliloti).